The sequence spans 306 residues: Ribonuclease Z (306 aa).

Zn(2+)-binding residues include His-61, His-63, Asp-65, His-66, His-137, Asp-207, and His-263. The active-site Proton acceptor is Asp-65.

This sequence belongs to the RNase Z family. Homodimer. Zn(2+) serves as cofactor.

The enzyme catalyses Endonucleolytic cleavage of RNA, removing extra 3' nucleotides from tRNA precursor, generating 3' termini of tRNAs. A 3'-hydroxy group is left at the tRNA terminus and a 5'-phosphoryl group is left at the trailer molecule.. Functionally, zinc phosphodiesterase, which displays some tRNA 3'-processing endonuclease activity. Probably involved in tRNA maturation, by removing a 3'-trailer from precursor tRNA. In Thermococcus sibiricus (strain DSM 12597 / MM 739), this protein is Ribonuclease Z.